A 740-amino-acid polypeptide reads, in one-letter code: MTDSSTLAELSPDFQRIVEARHHDPFAVLGRHRRDNRDLIRAFLPQAEEVRVGSAGRVMERIAGTAIFECEVEAETTDLHYRLYWTDQTGQTHSFIDPYTFPPRLSDFDLYLFGEGRHWNIYRVLGAHPHSVDGIDGILFATWAPNAERISVVGEFNGWDGRRHPMRVRGASGVWELFIPELQPGLLYKFEIRNRAHGTIHLKSDPYGRQFELRPNTASIITRESGYAWNDADWLAQRKDWPWLHRPLSVYEMHAGSWKRDLEGGYLNYRDLAHELVDYVKSAGFSHIELMPVTEHPLDASWGYQTTGYFAPTSRFGTPDDFRYFVDHCHRNGIGVILDWVPAHFPKDAHGLARFDGTALYEHEDPRLGEHRDWGTLIYNYGRNEVKNFLLGSALFWLEEFHLDGLRVDAVASMLYLDYSRQPGDWIPNKYGGNENLEAIAFLRDLNTVVHQQFPGVLVIAEESTAWPQVTRPTWTGGLGFSMKWNMGWMHDILVYMGKDPVHRHYHHDQLTFGLLYAFTENFVLPFSHDEVVHGKGSMLAKMPGDEWRRFANLRVLYTMMFTYPGKKLLFMGCEFAQTGEWNHTTALDWPLLESNLHKGVLHLVSDLNRLYQSTSALYAYDFESQGFEWIDSHDAAQSVISYVRRDDDSHVVVVLNFTPVPRHNYRIGVPEPVGYREVFNSDAECYGGANLGNWEIKTESVEWMGRAQSVVLTLPPLAGIVLAPVAPSATPDCGTPGDE.

Asp409 serves as the catalytic Nucleophile. The Proton donor role is filled by Glu462.

The protein belongs to the glycosyl hydrolase 13 family. GlgB subfamily. In terms of assembly, monomer.

It catalyses the reaction Transfers a segment of a (1-&gt;4)-alpha-D-glucan chain to a primary hydroxy group in a similar glucan chain.. It participates in glycan biosynthesis; glycogen biosynthesis. Catalyzes the formation of the alpha-1,6-glucosidic linkages in glycogen by scission of a 1,4-alpha-linked oligosaccharide from growing alpha-1,4-glucan chains and the subsequent attachment of the oligosaccharide to the alpha-1,6 position. The sequence is that of 1,4-alpha-glucan branching enzyme GlgB from Methylococcus capsulatus (strain ATCC 33009 / NCIMB 11132 / Bath).